Consider the following 484-residue polypeptide: Regulator of G-protein signaling 9 (484 aa).

A DEP domain is found at 30–105 (PDTGVRVQNQ…PDSSLYRFQT (76 aa)). The 62-residue stretch at 219–280 (VVSVRKEIMY…ITDDTQFWDL (62 aa)) folds into the G protein gamma domain. The RGS domain occupies 299 to 414 (NFSELIRDPK…LKSPIYKEML (116 aa)). The disordered stretch occupies residues 460-484 (TTVDITQVMSKLDRRSQLRKEPPPK). The segment covering 470–484 (KLDRRSQLRKEPPPK) has biased composition (basic and acidic residues).

As to quaternary structure, heterodimer with GNB5. Interacts with RGS7BP, leading to regulate the subcellular location of the heterodimer formed with GNB5. Component of the RGS9-1-Gbeta5 complex composed of RGS9 (RGS9-1), Gbeta5 (GNB5) and RGS9BP. Interacts with PDE6G and GNAT1. In terms of processing, phosphorylation is decreased by light exposition. Photoreceptor outer segments.

Its subcellular location is the membrane. Functionally, inhibits signal transduction by increasing the GTPase activity of G protein alpha subunits thereby driving them into their inactive GDP-bound form. Binds to GNAT1. Involved in phototransduction; key element in the recovery phase of visual transduction. This chain is Regulator of G-protein signaling 9 (RGS9), found in Bos taurus (Bovine).